We begin with the raw amino-acid sequence, 153 residues long: MKELTKNKKAWHNFTIIENFEAGIVLKGSEVKALRMGRANLKDSFCRIIKGELFLLNAHISFLENTNAFFRPSENGARKLLMHKKEINRLFGAVSKEGMAIVALSLYLNDKNKVKARIALAKGKNLHDKREALKRKEAEREAQSAMKRYAKGY.

Residues 132 to 142 (ALKRKEAEREA) show a composition bias toward basic and acidic residues. Positions 132 to 153 (ALKRKEAEREAQSAMKRYAKGY) are disordered.

This sequence belongs to the SmpB family.

The protein localises to the cytoplasm. In terms of biological role, required for rescue of stalled ribosomes mediated by trans-translation. Binds to transfer-messenger RNA (tmRNA), required for stable association of tmRNA with ribosomes. tmRNA and SmpB together mimic tRNA shape, replacing the anticodon stem-loop with SmpB. tmRNA is encoded by the ssrA gene; the 2 termini fold to resemble tRNA(Ala) and it encodes a 'tag peptide', a short internal open reading frame. During trans-translation Ala-aminoacylated tmRNA acts like a tRNA, entering the A-site of stalled ribosomes, displacing the stalled mRNA. The ribosome then switches to translate the ORF on the tmRNA; the nascent peptide is terminated with the 'tag peptide' encoded by the tmRNA and targeted for degradation. The ribosome is freed to recommence translation, which seems to be the essential function of trans-translation. The sequence is that of SsrA-binding protein from Campylobacter hominis (strain ATCC BAA-381 / DSM 21671 / CCUG 45161 / LMG 19568 / NCTC 13146 / CH001A).